The following is a 58-amino-acid chain: Photosystem II reaction center protein K (58 aa).

Positions 1–21 are excised as a propeptide; that stretch reads MLNMISTFFDSSSNFSEAFLA. The helical transmembrane segment at 29-49 threads the bilayer; sequence IFDPIVDVMPIIPVFFLLLAF.

The protein belongs to the PsbK family. In terms of assembly, PSII is composed of 1 copy each of membrane proteins PsbA, PsbB, PsbC, PsbD, PsbE, PsbF, PsbH, PsbI, PsbJ, PsbK, PsbL, PsbM, PsbT, PsbX, PsbY, PsbZ, Psb30/Ycf12, at least 3 peripheral proteins of the oxygen-evolving complex and a large number of cofactors. It forms dimeric complexes.

Its subcellular location is the plastid. The protein localises to the chloroplast thylakoid membrane. One of the components of the core complex of photosystem II (PSII). PSII is a light-driven water:plastoquinone oxidoreductase that uses light energy to abstract electrons from H(2)O, generating O(2) and a proton gradient subsequently used for ATP formation. It consists of a core antenna complex that captures photons, and an electron transfer chain that converts photonic excitation into a charge separation. The chain is Photosystem II reaction center protein K from Chaetosphaeridium globosum (Charophycean green alga).